The following is a 60-amino-acid chain: Large ribosomal subunit protein bL32 (60 aa).

Residues 1-20 are compositionally biased toward basic residues; sequence MAVQKSRKSRSRRDMRRSHH. The segment at 1-60 is disordered; sequence MAVQKSRKSRSRRDMRRSHHHMEVAELSIDATTGEKHRRHHMTKDGFYRGRQLFKASQED.

Belongs to the bacterial ribosomal protein bL32 family.

This is Large ribosomal subunit protein bL32 from Psychrobacter sp. (strain PRwf-1).